The following is a 72-amino-acid chain: Translation initiation factor IF-1 (72 aa).

Residues 1 to 72 enclose the S1-like domain; it reads MAKEKDTIRT…PTRGRIVYRK (72 aa).

Belongs to the IF-1 family. As to quaternary structure, component of the 30S ribosomal translation pre-initiation complex which assembles on the 30S ribosome in the order IF-2 and IF-3, IF-1 and N-formylmethionyl-tRNA(fMet); mRNA recruitment can occur at any time during PIC assembly.

It is found in the cytoplasm. Its function is as follows. One of the essential components for the initiation of protein synthesis. Stabilizes the binding of IF-2 and IF-3 on the 30S subunit to which N-formylmethionyl-tRNA(fMet) subsequently binds. Helps modulate mRNA selection, yielding the 30S pre-initiation complex (PIC). Upon addition of the 50S ribosomal subunit IF-1, IF-2 and IF-3 are released leaving the mature 70S translation initiation complex. This Thermus thermophilus (strain ATCC BAA-163 / DSM 7039 / HB27) protein is Translation initiation factor IF-1.